We begin with the raw amino-acid sequence, 170 residues long: Transcription factor E (170 aa).

In terms of domain architecture, HTH TFE/IIEalpha-type spans 1 to 93 (MKEAYLYIVE…TWYVDDEIIR (93 aa)).

Belongs to the TFE family. As to quaternary structure, monomer. Interaction with RNA polymerase subunits RpoF and RpoE is necessary for Tfe stimulatory transcription activity. Able to interact with Tbp and RNA polymerase in the absence of DNA promoter. Interacts both with the preinitiation and elongation complexes.

Transcription factor that plays a role in the activation of archaeal genes transcribed by RNA polymerase. Facilitates transcription initiation by enhancing TATA-box recognition by TATA-box-binding protein (Tbp), and transcription factor B (Tfb) and RNA polymerase recruitment. Not absolutely required for transcription in vitro, but particularly important in cases where Tbp or Tfb function is not optimal. It dynamically alters the nucleic acid-binding properties of RNA polymerases by stabilizing the initiation complex and destabilizing elongation complexes. Seems to translocate with the RNA polymerase following initiation and acts by binding to the non template strand of the transcription bubble in elongation complexes. This Pyrobaculum islandicum (strain DSM 4184 / JCM 9189 / GEO3) protein is Transcription factor E.